A 147-amino-acid polypeptide reads, in one-letter code: Hemoglobin subunit epsilon (147 aa).

One can recognise a Globin domain in the interval His3–His147. Ser14 and Ser51 each carry phosphoserine. The heme b site is built by His64 and His93.

The protein belongs to the globin family. In terms of assembly, heterotetramer of two alpha chains and two epsilon chains in early embryonic hemoglobin Gower-2; two zeta chains and two epsilon chains in early embryonic hemoglobin Gower-1. As to expression, red blood cells.

The epsilon chain is a beta-type chain of early mammalian embryonic hemoglobin. This Callithrix jacchus (White-tufted-ear marmoset) protein is Hemoglobin subunit epsilon (HBE1).